The sequence spans 103 residues: Flagellar hook-basal body complex protein FliE (103 aa).

The protein belongs to the FliE family.

It is found in the bacterial flagellum basal body. The sequence is that of Flagellar hook-basal body complex protein FliE from Photorhabdus laumondii subsp. laumondii (strain DSM 15139 / CIP 105565 / TT01) (Photorhabdus luminescens subsp. laumondii).